The following is a 1092-amino-acid chain: Probable cellulose synthase A catalytic subunit 5 [UDP-forming] (1092 aa).

Residues 1-279 (MEASAGLVAG…SSSLVNPYRM (279 aa)) are Cytoplasmic-facing. Zn(2+)-binding residues include Cys39, Cys42, Cys58, Cys61, Cys66, Cys69, Cys81, and Cys84. An RING-type; degenerate zinc finger spans residues 39 to 85 (CQICGDDVGLTPDGEPFVACNECAFPVCRDCYEYERREGTQNCPQCK). A helical membrane pass occupies residues 280-300 (IIIIRLVVLGFFFHYRVMHPV). Residues 301 to 302 (PD) are Extracellular-facing. The chain crosses the membrane as a helical span at residues 303-323 (AFALWLISVICEIWFAMSWIL). Residues 324–868 (DQFPKWFPIE…CLERFSYINS (545 aa)) lie on the Cytoplasmic side of the membrane. UDP-alpha-D-glucose is bound by residues Ser362, Lys368, Glu369, and Asp398. The active site involves Asp398. The stretch at 450-479 (NFVRERRAMKREYEEFKVRINALVAKAQKV) forms a coiled coil. Residue Lys539 participates in UDP-alpha-D-glucose binding. Mn(2+) is bound by residues Lys540 and Asp564. Residue Asp792 is part of the active site. A helical membrane pass occupies residues 869 to 889 (IVYPWTSIPLLAYCTLPAICL). Over 890–901 (LTGKFITPELTN) the chain is Extracellular. Residues 902–922 (IASLWFMSLFICIFATGILEM) form a helical membrane-spanning segment. The Cytoplasmic portion of the chain corresponds to 923 to 938 (RWSGVGIDDWWRNEQF). The chain crosses the membrane as a helical span at residues 939–959 (WVIGGVSSHLFAVFQGLLKVI). Topologically, residues 960–987 (AGIDTSFTVTSKGGDDEEFSELYTFKWT) are extracellular. A helical transmembrane segment spans residues 988-1008 (TLLIPPTTLLLLNFIGVVAGV). Residues 1009–1019 (SNAINNGYESW) are Cytoplasmic-facing. The helical transmembrane segment at 1020–1040 (GPLFGKLFFAFWVIVHLYPFL) threads the bilayer. At 1041 to 1049 (KGLVGRQNR) the chain is on the extracellular side. The chain crosses the membrane as a helical span at residues 1050 to 1070 (TPTIVIVWSILLASIFSLLWV). At 1071-1092 (RIDPFLAKNDGPLLEECGLDCN) the chain is on the cytoplasmic side.

Belongs to the glycosyltransferase 2 family. Plant cellulose synthase subfamily. Mn(2+) is required as a cofactor. Requires Zn(2+) as cofactor.

It localises to the cell membrane. The enzyme catalyses [(1-&gt;4)-beta-D-glucosyl](n) + UDP-alpha-D-glucose = [(1-&gt;4)-beta-D-glucosyl](n+1) + UDP + H(+). It functions in the pathway glycan metabolism; plant cellulose biosynthesis. Probable catalytic subunit of cellulose synthase terminal complexes ('rosettes'), required for beta-1,4-glucan microfibril crystallization, a major mechanism of the cell wall formation. The polypeptide is Probable cellulose synthase A catalytic subunit 5 [UDP-forming] (CESA5) (Oryza sativa subsp. indica (Rice)).